Here is a 367-residue protein sequence, read N- to C-terminus: Tetraprenyl-beta-curcumene synthase (367 aa).

The protein belongs to the large terpene synthase family.

The catalysed reaction is all-trans-heptaprenyl diphosphate = (R)-tetraprenyl-beta-curcumene + diphosphate. Its function is as follows. Catalyzes the transformation of a linear C35 prenyl diphosphate chain to form tetraprenyl-beta-curcumene. This chain is Tetraprenyl-beta-curcumene synthase (ytpB), found in Bacillus subtilis (strain 168).